The following is a 434-amino-acid chain: Histidinol dehydrogenase (434 aa).

3 residues coordinate NAD(+): Tyr-130, Gln-191, and Asn-214. 3 residues coordinate substrate: Ser-237, Gln-259, and His-262. Zn(2+) contacts are provided by Gln-259 and His-262. Residues Glu-328 and His-329 each act as proton acceptor in the active site. His-329, Asp-362, Glu-416, and His-421 together coordinate substrate. Asp-362 provides a ligand contact to Zn(2+). His-421 serves as a coordination point for Zn(2+).

This sequence belongs to the histidinol dehydrogenase family. It depends on Zn(2+) as a cofactor.

It carries out the reaction L-histidinol + 2 NAD(+) + H2O = L-histidine + 2 NADH + 3 H(+). Its pathway is amino-acid biosynthesis; L-histidine biosynthesis; L-histidine from 5-phospho-alpha-D-ribose 1-diphosphate: step 9/9. Functionally, catalyzes the sequential NAD-dependent oxidations of L-histidinol to L-histidinaldehyde and then to L-histidine. This Rhodospirillum rubrum (strain ATCC 11170 / ATH 1.1.1 / DSM 467 / LMG 4362 / NCIMB 8255 / S1) protein is Histidinol dehydrogenase.